Reading from the N-terminus, the 223-residue chain is Adenylate kinase (223 aa).

10–15 contributes to the ATP binding site; it reads GSGKGT. An NMP region spans residues 30-59; sequence ESGAIFREHIGGGTELGKKAKAYIDRGDLV. AMP-binding positions include serine 31, arginine 36, 57–59, 84–87, and glutamine 91; these read DLV and GFPR. Residues 125–164 are LID; it reads GRRLCKNNNNHPNNIFIEAIKPNGDVCRVCGGTLSSRSDD. Residue arginine 126 participates in ATP binding. Positions 161 and 173 each coordinate AMP. Residue glycine 209 participates in ATP binding.

This sequence belongs to the adenylate kinase family. In terms of assembly, monomer.

The protein localises to the cytoplasm. It carries out the reaction AMP + ATP = 2 ADP. It functions in the pathway purine metabolism; AMP biosynthesis via salvage pathway; AMP from ADP: step 1/1. Its function is as follows. Catalyzes the reversible transfer of the terminal phosphate group between ATP and AMP. Plays an important role in cellular energy homeostasis and in adenine nucleotide metabolism. This chain is Adenylate kinase, found in Desulfovibrio desulfuricans (strain ATCC 27774 / DSM 6949 / MB).